Here is a 674-residue protein sequence, read N- to C-terminus: DNA ligase (674 aa).

NAD(+) contacts are provided by residues 36 to 40 (DSVYD), 85 to 86 (SL), and glutamate 116. Lysine 118 acts as the N6-AMP-lysine intermediate in catalysis. The NAD(+) site is built by arginine 139, glutamate 176, lysine 292, and lysine 316. Zn(2+)-binding residues include cysteine 410, cysteine 413, cysteine 428, and cysteine 433. The region spanning 596 to 674 (PSSGNIAGKT…EADLLKFLTN (79 aa)) is the BRCT domain.

Belongs to the NAD-dependent DNA ligase family. LigA subfamily. Requires Mg(2+) as cofactor. Mn(2+) is required as a cofactor.

The enzyme catalyses NAD(+) + (deoxyribonucleotide)n-3'-hydroxyl + 5'-phospho-(deoxyribonucleotide)m = (deoxyribonucleotide)n+m + AMP + beta-nicotinamide D-nucleotide.. Functionally, DNA ligase that catalyzes the formation of phosphodiester linkages between 5'-phosphoryl and 3'-hydroxyl groups in double-stranded DNA using NAD as a coenzyme and as the energy source for the reaction. It is essential for DNA replication and repair of damaged DNA. The polypeptide is DNA ligase (Rippkaea orientalis (strain PCC 8801 / RF-1) (Cyanothece sp. (strain PCC 8801))).